The following is a 263-amino-acid chain: Polyglutamine-binding protein 1 (263 aa).

The region spanning 46 to 80 (EGLPPSWYKVFDPSCGLPYYWNVETDLVSWLSPHD) is the WW domain. Residues 94–263 (NSNADAEDKS…AEASRSKQQD (170 aa)) form a disordered region. The segment covering 99–173 (AEDKSERNLE…DKADREDGKD (75 aa)) has biased composition (basic and acidic residues). Residues 104 to 110 (ERNLEKV) form a 1-1; approximate repeat. Positions 104-138 (ERNLEKVDRNHEKSDRSHEKPDRSHEKADRNHEKS) are 5 X 7 AA approximate tandem repeats of D-R-[NS]-H-E-K-S. Residues 111–117 (DRNHEKS) form a 1-2 repeat. One copy of the 1-3; approximate repeat lies at 118 to 124 (DRSHEKP). A 1-4; approximate repeat occupies 125–131 (DRSHEKA). 10 repeat units span residues 132 to 138 (DRNHEKS), 139 to 140 (DR), 141 to 142 (ER), 143 to 144 (ER), 150 to 151 (DR), 152 to 153 (ER), 154 to 155 (DR), 156 to 157 (DR), 158 to 159 (ER), and 160 to 161 (ER). Residues 139-144 (DRERER) are 3 X 2 AA tandem repeats of [DE]-R. A 6 X 2 AA tandem repeats of [DE]-R region spans residues 150–161 (DRERDRDRERER). The important for interaction with TXNL4A stretch occupies residues 243 to 253 (YPSPGAVLRAN). Phosphoserine is present on Ser-245.

Interacts with POU3F2/Brn-2, ATXN1, TXNL4A, HTT and AR. Interaction with ATXN1 correlates positively with the length of the polyglutamine tract. Interacts with RNA polymerase II large subunit in a phosphorylation-dependent manner. Forms a ternary complex with ATXN1 mutant and phosphorylated RNA polymerase II. Interacts (via C-terminus) with TXNL4A and CD2BP2. Interacts (via WW domain) with ATN1 and SF3B1, and may interact with additional splice factors. Interacts (via WW domain) with WBP11; Leading to reduce interaction between PQBP1 and TXNL4A. Interacts with CAPRIN1. Interacts with DDX1. Interacts with SFPQ. Interacts with KHSRP.

It localises to the nucleus. It is found in the nucleus speckle. Its subcellular location is the cytoplasmic granule. Intrinsically disordered protein that acts as a scaffold, and which is involved in different processes, such as pre-mRNA splicing, transcription regulation, innate immunity and neuron development. Interacts with splicing-related factors via the intrinsically disordered region and regulates alternative splicing of target pre-mRNA species. May suppress the ability of POU3F2 to transactivate the DRD1 gene in a POU3F2 dependent manner. Can activate transcription directly or via association with the transcription machinery. May be involved in ATXN1 mutant-induced cell death. The interaction with ATXN1 mutant reduces levels of phosphorylated RNA polymerase II large subunit. Involved in the assembly of cytoplasmic stress granule, possibly by participating in the transport of neuronal RNA granules. Also acts as an innate immune sensor of infection by retroviruses, by detecting the presence of reverse-transcribed DNA in the cytosol. Directly binds retroviral reverse-transcribed DNA in the cytosol and interacts with CGAS, leading to activate the cGAS-STING signaling pathway, triggering type-I interferon production. This Rattus norvegicus (Rat) protein is Polyglutamine-binding protein 1 (Pqbp1).